The primary structure comprises 127 residues: Large ribosomal subunit protein bL12 (127 aa).

The protein belongs to the bacterial ribosomal protein bL12 family. In terms of assembly, homodimer. Part of the ribosomal stalk of the 50S ribosomal subunit. Forms a multimeric L10(L12)X complex, where L10 forms an elongated spine to which 2 to 4 L12 dimers bind in a sequential fashion. Binds GTP-bound translation factors.

In terms of biological role, forms part of the ribosomal stalk which helps the ribosome interact with GTP-bound translation factors. Is thus essential for accurate translation. The sequence is that of Large ribosomal subunit protein bL12 from Streptococcus thermophilus (strain CNRZ 1066).